Consider the following 231-residue polypeptide: Aquaporin Z (231 aa).

2 helical membrane-spanning segments follow: residues 9 to 29 (CFGT…AAGF) and 34 to 54 (IGFA…AFAV). The short motif at 63–65 (NPA) is the NPA 1 element. The next 3 membrane-spanning stretches (helical) occupy residues 82–102 (VGYV…LYLI), 129–149 (YSML…LLVI), and 156–176 (FAPA…IHLI). The NPA 2 signature appears at 186 to 188 (NPA). The helical transmembrane segment at 202-222 (LEQLWFFWVVPIVGGIIGGLI) threads the bilayer.

The protein belongs to the MIP/aquaporin (TC 1.A.8) family. As to quaternary structure, homotetramer.

Its subcellular location is the cell inner membrane. The catalysed reaction is H2O(in) = H2O(out). Functionally, channel that permits osmotically driven movement of water in both directions. It is involved in the osmoregulation and in the maintenance of cell turgor during volume expansion in rapidly growing cells. It mediates rapid entry or exit of water in response to abrupt changes in osmolarity. This is Aquaporin Z from Escherichia coli O6:H1 (strain CFT073 / ATCC 700928 / UPEC).